The following is a 677-amino-acid chain: Nuclear fusion protein FUS2 (677 aa).

Threonine 20 is modified (phosphothreonine). Phosphoserine is present on residues serine 67, serine 72, and serine 84. Threonine 88 carries the post-translational modification Phosphothreonine. 2 positions are modified to phosphoserine: serine 100 and serine 106. A DH domain is found at 112-326 (KFYKIVQEFY…KYSLFSNKLE (215 aa)).

It is found in the cell tip. Promotes cell fusion during zygote formation. The chain is Nuclear fusion protein FUS2 (FUS2) from Saccharomyces cerevisiae (strain ATCC 204508 / S288c) (Baker's yeast).